A 548-amino-acid polypeptide reads, in one-letter code: Chaperonin GroEL (548 aa).

Residues threonine 30–proline 33, lysine 51, aspartate 87–threonine 91, glycine 415, asparagine 479–alanine 481, and aspartate 495 contribute to the ATP site.

The protein belongs to the chaperonin (HSP60) family. Forms a cylinder of 14 subunits composed of two heptameric rings stacked back-to-back. Interacts with the co-chaperonin GroES.

It localises to the cytoplasm. The catalysed reaction is ATP + H2O + a folded polypeptide = ADP + phosphate + an unfolded polypeptide.. Together with its co-chaperonin GroES, plays an essential role in assisting protein folding. The GroEL-GroES system forms a nano-cage that allows encapsulation of the non-native substrate proteins and provides a physical environment optimized to promote and accelerate protein folding. The protein is Chaperonin GroEL of Sodalis glossinidius (strain morsitans).